Reading from the N-terminus, the 1162-residue chain is Nucleoporin nup132 (1162 aa).

Belongs to the nucleoporin Nup133 family. Component of the npc107-120 complex which consists of nup85, nup107, nup120, nup131, nup132 and seh1. Interacts with nup107.

It is found in the nucleus envelope. Functionally, functions as a component of the nuclear pore complex (NPC). NPC components, collectively referred to as nucleoporins (NUPs), can play the role of both NPC structural components and of docking or interaction partners for transiently associated nuclear transport factors. Active directional transport is assured by both, a Phe-Gly (FG) repeat affinity gradient for these transport factors across the NPC and a transport cofactor concentration gradient across the nuclear envelope. This is Nucleoporin nup132 (nup132) from Schizosaccharomyces pombe (strain 972 / ATCC 24843) (Fission yeast).